Consider the following 175-residue polypeptide: Signal peptidase complex catalytic subunit sec11 (175 aa).

Over M1–Q14 the chain is Cytoplasmic. Residues S15–M31 form a helical; Signal-anchor for type II membrane protein membrane-spanning segment. Residues M32 to E175 lie on the Lumenal side of the membrane. Active-site charge relay system residues include S53, H92, and D117. Residues V161–I172 form a C-terminal short (CTS) helix region.

This sequence belongs to the peptidase S26B family. Component of the signal peptidase complex (SPC) composed of a catalytic subunit SEC11 and three accessory subunits SPC1, SPC2 and SPC3. The complex induces a local thinning of the ER membrane which is used to measure the length of the signal peptide (SP) h-region of protein substrates. This ensures the selectivity of the complex towards h-regions shorter than 18-20 amino acids. SPC associates with the translocon complex.

The protein localises to the endoplasmic reticulum membrane. It catalyses the reaction Cleavage of hydrophobic, N-terminal signal or leader sequences from secreted and periplasmic proteins.. Its function is as follows. Catalytic component of the signal peptidase complex (SPC) which catalyzes the cleavage of N-terminal signal sequences from nascent proteins as they are translocated into the lumen of the endoplasmic reticulum. Specifically cleaves N-terminal signal peptides that contain a hydrophobic alpha-helix (h-region) shorter than 18-20 amino acids. The polypeptide is Signal peptidase complex catalytic subunit sec11 (sec11) (Penicillium rubens (strain ATCC 28089 / DSM 1075 / NRRL 1951 / Wisconsin 54-1255) (Penicillium chrysogenum)).